Reading from the N-terminus, the 399-residue chain is L-asparaginase-like protein GG20738 (399 aa).

The N-terminal stretch at 1 to 22 (MLAQSCCLRLLILLLLCKSTCS) is a signal peptide. 3 disulfides stabilise this stretch: Cys90–Cys95, Cys189–Cys205, and Cys344–Cys371.

Belongs to the Ntn-hydrolase family.

The polypeptide is L-asparaginase-like protein GG20738 (Drosophila erecta (Fruit fly)).